Here is a 98-residue protein sequence, read N- to C-terminus: Large ribosomal subunit protein uL23 (98 aa).

It belongs to the universal ribosomal protein uL23 family. In terms of assembly, part of the 50S ribosomal subunit. Contacts protein L29, and trigger factor when it is bound to the ribosome.

In terms of biological role, one of the early assembly proteins it binds 23S rRNA. One of the proteins that surrounds the polypeptide exit tunnel on the outside of the ribosome. Forms the main docking site for trigger factor binding to the ribosome. This is Large ribosomal subunit protein uL23 from Legionella pneumophila (strain Paris).